We begin with the raw amino-acid sequence, 927 residues long: DNA polymerase alpha-binding protein (927 aa).

4 WD repeats span residues 10–49 (FDFG…EEPE), 134–173 (KIDE…PNKV), 227–266 (AANR…LQKT), and 273–313 (STKA…IHYT). Phosphoserine is present on residues serine 377, serine 379, and serine 398. 2 positions are modified to phosphothreonine: threonine 401 and threonine 411. Phosphoserine is present on serine 463. The WD 5 repeat unit spans residues 699–739 (GSDNTLLLLSKWRSPEESKWLPILDSNMEIWKMSGGKETTD).

Its subcellular location is the nucleus. Its function is as follows. Accessory factor for DNA replication. It plays a role in accurately duplicating the genome in vivo. The sequence is that of DNA polymerase alpha-binding protein (CTF4) from Saccharomyces cerevisiae (strain ATCC 204508 / S288c) (Baker's yeast).